The primary structure comprises 220 residues: Probable nicotinate-nucleotide adenylyltransferase (220 aa).

This sequence belongs to the NadD family.

It catalyses the reaction nicotinate beta-D-ribonucleotide + ATP + H(+) = deamido-NAD(+) + diphosphate. Its pathway is cofactor biosynthesis; NAD(+) biosynthesis; deamido-NAD(+) from nicotinate D-ribonucleotide: step 1/1. Functionally, catalyzes the reversible adenylation of nicotinate mononucleotide (NaMN) to nicotinic acid adenine dinucleotide (NaAD). The polypeptide is Probable nicotinate-nucleotide adenylyltransferase (Saccharophagus degradans (strain 2-40 / ATCC 43961 / DSM 17024)).